Reading from the N-terminus, the 181-residue chain is ATP-dependent protease subunit HslV (181 aa).

The active site involves threonine 7. The Na(+) site is built by glycine 166, cysteine 169, and threonine 172.

The protein belongs to the peptidase T1B family. HslV subfamily. In terms of assembly, a double ring-shaped homohexamer of HslV is capped on each side by a ring-shaped HslU homohexamer. The assembly of the HslU/HslV complex is dependent on binding of ATP.

The protein localises to the cytoplasm. It catalyses the reaction ATP-dependent cleavage of peptide bonds with broad specificity.. Its activity is regulated as follows. Allosterically activated by HslU binding. In terms of biological role, protease subunit of a proteasome-like degradation complex believed to be a general protein degrading machinery. This Variovorax paradoxus (strain S110) protein is ATP-dependent protease subunit HslV.